Here is a 600-residue protein sequence, read N- to C-terminus: UvrABC system protein C (600 aa).

The GIY-YIG domain occupies 15–100 (NSAGVYQYFN…IKQLHPKYNI (86 aa)). Residues 203–238 (SILIKNLEKQMLVLAQNENYEEAAKVRDQIVTIKDL) form the UVR domain.

Belongs to the UvrC family. Interacts with UvrB in an incision complex.

The protein localises to the cytoplasm. Functionally, the UvrABC repair system catalyzes the recognition and processing of DNA lesions. UvrC both incises the 5' and 3' sides of the lesion. The N-terminal half is responsible for the 3' incision and the C-terminal half is responsible for the 5' incision. This Campylobacter jejuni subsp. jejuni serotype O:6 (strain 81116 / NCTC 11828) protein is UvrABC system protein C.